Consider the following 84-residue polypeptide: Serine protease inhibitor Kazal-type 2 (84 aa).

The N-terminal stretch at 1-23 (MALSVLRLALLLLAVTFAASLIP) is a signal peptide. Q24 carries the post-translational modification Pyrrolidone carboxylic acid. Positions 30–84 (KYRTPNCSQYRLPGCPRHFNPVCGSDMSTYANECTLCMKIREGGHNIKIIRNGPC) constitute a Kazal-like domain. Intrachain disulfides connect C36–C66, C44–C63, and C52–C84.

In terms of tissue distribution, expressed in epididymis (at protein level).

Its subcellular location is the secreted. The protein resides in the cytoplasmic vesicle. It localises to the secretory vesicle. It is found in the acrosome. Functionally, as a strong inhibitor of acrosin, it is required for normal spermiogenesis. It probably hinders premature activation of proacrosin and other proteases, thus preventing the cascade of events leading to spermiogenesis defects. May be involved in the regulation of serine protease-dependent germ cell apoptosis. It also inhibits trypsin. This is Serine protease inhibitor Kazal-type 2 (SPINK2) from Homo sapiens (Human).